A 229-amino-acid chain; its full sequence is PHO85 cyclin-5 (229 aa).

The span at 1–24 (MDGNHRFTPDSKEFNTVVKSKESS) shows a compositional bias: basic and acidic residues. A disordered region spans residues 1 to 46 (MDGNHRFTPDSKEFNTVVKSKESSTGRNPYQTPPLEHNGTHHQTNY).

This sequence belongs to the cyclin family. PCL1,2 subfamily. Forms a cyclin-CDK complex with PHO85.

Its function is as follows. Cyclin partner of the cyclin-dependent kinase (CDK) PHO85. Positively controls degradation of transcription factor GCN4 under favorable growth conditions. The PCL5-PHO85 cyclin-CDK holoenzyme phosphorylates GCN4, which is required for its degradation by the E3 ubiquitin ligase complex SCF(Cdc4). Amino acid starvation reduces PCL5-PHO85-associated GCN4 kinase activity and leads to stabilization of GCN4. The chain is PHO85 cyclin-5 (PCL5) from Saccharomyces cerevisiae (strain ATCC 204508 / S288c) (Baker's yeast).